Consider the following 195-residue polypeptide: Probable prefoldin subunit 3 (195 aa).

Belongs to the prefoldin subunit alpha family. In terms of assembly, heterohexamer of two PFD-alpha type and four PFD-beta type subunits.

Binds specifically to cytosolic chaperonin (c-CPN) and transfers target proteins to it. Binds to nascent polypeptide chain and promotes folding in an environment in which there are many competing pathways for nonnative proteins. This Dictyostelium discoideum (Social amoeba) protein is Probable prefoldin subunit 3 (pfdn3).